The sequence spans 281 residues: Release factor glutamine methyltransferase (281 aa).

2 residues coordinate S-adenosyl-L-methionine: Glu142 and Asn184. Substrate is bound at residue 184–187; it reads NPPY. Positions 261 to 281 are disordered; sequence AADHPDLNNRPRFATARKALP.

This sequence belongs to the protein N5-glutamine methyltransferase family. PrmC subfamily.

The enzyme catalyses L-glutaminyl-[peptide chain release factor] + S-adenosyl-L-methionine = N(5)-methyl-L-glutaminyl-[peptide chain release factor] + S-adenosyl-L-homocysteine + H(+). In terms of biological role, methylates the class 1 translation termination release factors RF1/PrfA and RF2/PrfB on the glutamine residue of the universally conserved GGQ motif. The polypeptide is Release factor glutamine methyltransferase (Streptomyces coelicolor (strain ATCC BAA-471 / A3(2) / M145)).